The following is a 65-amino-acid chain: Small ribosomal subunit protein bS21B (65 aa).

It belongs to the bacterial ribosomal protein bS21 family.

The sequence is that of Small ribosomal subunit protein bS21B from Francisella tularensis subsp. holarctica (strain LVS).